A 301-amino-acid chain; its full sequence is Protoheme IX farnesyltransferase 1 (301 aa).

Transmembrane regions (helical) follow at residues 29-49 (VVAL…PHAV), 51-71 (VQPL…AAAL), 101-121 (ALIF…SLVN), 123-143 (LTAW…TAYL), 150-170 (NIVI…TAVT), 177-197 (ALLL…ALAI), 223-243 (CILL…LVGM), 244-264 (CGPV…YKAW), and 275-295 (AMQV…ALLL).

It belongs to the UbiA prenyltransferase family. Protoheme IX farnesyltransferase subfamily.

The protein localises to the cell inner membrane. The catalysed reaction is heme b + (2E,6E)-farnesyl diphosphate + H2O = Fe(II)-heme o + diphosphate. The protein operates within porphyrin-containing compound metabolism; heme O biosynthesis; heme O from protoheme: step 1/1. Converts heme B (protoheme IX) to heme O by substitution of the vinyl group on carbon 2 of heme B porphyrin ring with a hydroxyethyl farnesyl side group. This is Protoheme IX farnesyltransferase 1 from Shewanella baltica (strain OS185).